The following is a 187-amino-acid chain: dCTP deaminase (187 aa).

Residues 110 to 115 (KSTYAR), 134 to 136 (TLE), glutamine 155, tyrosine 169, and glutamine 179 each bind dCTP. The active-site Proton donor/acceptor is glutamate 136.

The protein belongs to the dCTP deaminase family. As to quaternary structure, homotrimer.

It carries out the reaction dCTP + H2O + H(+) = dUTP + NH4(+). The protein operates within pyrimidine metabolism; dUMP biosynthesis; dUMP from dCTP (dUTP route): step 1/2. Functionally, catalyzes the deamination of dCTP to dUTP. In Bordetella bronchiseptica (strain ATCC BAA-588 / NCTC 13252 / RB50) (Alcaligenes bronchisepticus), this protein is dCTP deaminase.